A 342-amino-acid polypeptide reads, in one-letter code: N-acetyl-gamma-glutamyl-phosphate reductase (342 aa).

Residue Cys146 is part of the active site.

It belongs to the NAGSA dehydrogenase family. Type 1 subfamily.

It is found in the cytoplasm. The catalysed reaction is N-acetyl-L-glutamate 5-semialdehyde + phosphate + NADP(+) = N-acetyl-L-glutamyl 5-phosphate + NADPH + H(+). The protein operates within amino-acid biosynthesis; L-arginine biosynthesis; N(2)-acetyl-L-ornithine from L-glutamate: step 3/4. Catalyzes the NADPH-dependent reduction of N-acetyl-5-glutamyl phosphate to yield N-acetyl-L-glutamate 5-semialdehyde. In Thermobifida fusca (strain YX), this protein is N-acetyl-gamma-glutamyl-phosphate reductase.